The sequence spans 227 residues: Uracil-DNA glycosylase 2 (227 aa).

Residue Asp-67 is the Proton acceptor of the active site.

The protein belongs to the uracil-DNA glycosylase (UDG) superfamily. UNG family.

It is found in the cytoplasm. It catalyses the reaction Hydrolyzes single-stranded DNA or mismatched double-stranded DNA and polynucleotides, releasing free uracil.. Excises uracil residues from the DNA which can arise as a result of misincorporation of dUMP residues by DNA polymerase or due to deamination of cytosine. The polypeptide is Uracil-DNA glycosylase 2 (ung2) (Streptomyces coelicolor (strain ATCC BAA-471 / A3(2) / M145)).